We begin with the raw amino-acid sequence, 922 residues long: Hexokinase-3 (922 aa).

A disordered region spans residues 1-23 (MATIGPSGLHPGERASVCPHEGV). Hexokinase domains are found at residues 25-469 (RPSG…MVTA) and 475-911 (AAHR…LVTA). Positions 82 to 218 (HGTEQGDFLV…TYRIDVVAMV (137 aa)) are hexokinase small subdomain 1. 93-100 (ELGATGAS) is an ATP binding site. 93 to 102 (ELGATGASLR) provides a ligand contact to D-glucose 6-phosphate. D-glucose-binding positions include Ser-166, 183–184 (TK), and 219–220 (ND). A hexokinase large subdomain 1 region spans residues 219 to 458 (NDTVGTMMGC…CDVSFIPSVD (240 aa)). D-glucose 6-phosphate is bound by residues Asp-220 and Thr-243. D-glucose-binding positions include Asn-246, Glu-271, and 302 to 305 (QRFE). D-glucose 6-phosphate is bound at residue 424–426 (GGR). ATP contacts are provided by residues 436 to 437 (RI) and 540 to 545 (DLGGTN). The hexokinase small subdomain 2 stretch occupies residues 529–660 (DGSERGDFLA…AVELNVVAIV (132 aa)). 540–544 (DLGGT) contacts D-glucose 6-phosphate. D-glucose contacts are provided by residues 608–609 (SF), 625–626 (TK), and 661–662 (ND). The hexokinase large subdomain 2 stretch occupies residues 661 to 900 (NDTVGTMMSC…CTVTFLQSED (240 aa)). D-glucose 6-phosphate-binding residues include Asp-662 and Thr-685. Residue Thr-685 coordinates ATP. D-glucose is bound by residues 687–688 (TN), Glu-713, and Glu-747. ATP-binding positions include 752-753 (GM), 789-793 (TKFLS), and 868-872 (TLYKL). D-glucose 6-phosphate-binding positions include 866–868 (DGT) and Ser-902.

This sequence belongs to the hexokinase family.

It carries out the reaction a D-hexose + ATP = a D-hexose 6-phosphate + ADP + H(+). The enzyme catalyses D-fructose + ATP = D-fructose 6-phosphate + ADP + H(+). The catalysed reaction is D-glucose + ATP = D-glucose 6-phosphate + ADP + H(+). The protein operates within carbohydrate metabolism; hexose metabolism. It functions in the pathway carbohydrate degradation; glycolysis; D-glyceraldehyde 3-phosphate and glycerone phosphate from D-glucose: step 1/4. Hexokinase is an allosteric enzyme inhibited by its product D-glucose 6-phosphate. Functionally, catalyzes the phosphorylation of hexose, such as D-glucose and D-fructose, to hexose 6-phosphate (D-glucose 6-phosphate and D-fructose 6-phosphate, respectively). Mediates the initial step of glycolysis by catalyzing phosphorylation of D-glucose to D-glucose 6-phosphate. The protein is Hexokinase-3 of Mus musculus (Mouse).